A 205-amino-acid chain; its full sequence is MEFLWAPLLGLCCSLAAADRHIVFWNSSNPKFREEDYTVHVQLNDYLDIICPHYEDDSVADAAMERYTLYMVEHQEYVTCEPQSKDQVRWKCNQPSAKHGPEKLSEKFQRFTPFTLGKEFKEGHSYYYISKPIYHQETQCLKLKVTVNGKITHSPHAHANPQEKRLQADDPEVQVLHSIGHSAAPRLFPLVWAVLLLPLLLLQTQ.

Positions 1-17 are cleaved as a signal peptide; sequence MEFLWAPLLGLCCSLAA. The 134-residue stretch at 18 to 151 folds into the Ephrin RBD domain; it reads ADRHIVFWNS…KLKVTVNGKI (134 aa). N-linked (GlcNAc...) asparagine glycosylation is present at asparagine 26. 2 disulfide bridges follow: cysteine 51–cysteine 92 and cysteine 80–cysteine 140. Serine 182 is lipidated: GPI-anchor amidated serine. The propeptide at 183–205 is removed in mature form; sequence AAPRLFPLVWAVLLLPLLLLQTQ.

The protein belongs to the ephrin family. In terms of assembly, monomer. Homodimer. Forms heterodimers with EPHA2. Binds to the receptor tyrosine kinases EPHA2, EPHA3, EPHA4, EPHA5, EPHA6 and EPHA7. Also binds with low affinity to EPHA1. Undergoes proteolysis by a metalloprotease to give rise to a soluble monomeric form. Post-translationally, N-Glycosylation is required for binding to EPHA2 receptor and inducing its internalization.

Its subcellular location is the cell membrane. It localises to the secreted. Functionally, cell surface GPI-bound ligand for Eph receptors, a family of receptor tyrosine kinases which are crucial for migration, repulsion and adhesion during neuronal, vascular and epithelial development. Binds promiscuously Eph receptors residing on adjacent cells, leading to contact-dependent bidirectional signaling into neighboring cells. Plays an important role in angiogenesis and tumor neovascularization. The recruitment of VAV2, VAV3 and PI3-kinase p85 subunit by phosphorylated EPHA2 is critical for EFNA1-induced RAC1 GTPase activation and vascular endothelial cell migration and assembly. Exerts anti-oncogenic effects in tumor cells through activation and down-regulation of EPHA2. Activates EPHA2 by inducing tyrosine phosphorylation which leads to its internalization and degradation. Acts as a negative regulator in the tumorigenesis of gliomas by down-regulating EPHA2 and FAK. Can evoke collapse of embryonic neuronal growth cone and regulates dendritic spine morphogenesis. The sequence is that of Ephrin-A1 (Efna1) from Rattus norvegicus (Rat).